Consider the following 108-residue polypeptide: MEPNSPKKIQFAVPLFQSQIAPEAAEQIRKRRPTPASLVILNEHNSPEIDEKRVTNTQESQNASPKQRKQSVYTPPAMKGVKHLKDQNGSAFPEEEESASEREEKWNH.

Positions 25–108 are disordered; it reads AEQIRKRRPT…ASEREEKWNH (84 aa). Basic and acidic residues predominate over residues 45 to 54; sequence NSPEIDEKRV. Residues 55–73 are compositionally biased toward polar residues; it reads TNTQESQNASPKQRKQSVY. A compositionally biased stretch (basic and acidic residues) spans 99–108; that stretch reads ASEREEKWNH.

Belongs to the protein phosphatase inhibitor 1 family.

The protein localises to the cytoplasm. Functionally, may increase cell susceptibility to TNF-induced apoptosis. In Mus musculus (Mouse), this protein is Protein phosphatase 1 regulatory subunit 1C (Ppp1r1c).